The following is a 311-amino-acid chain: Reaction center protein L chain (311 aa).

Helical transmembrane passes span 68–90, 123–151, and 156–178; these read FWGF…ETIL, GFAW…SMKL, and HVPI…RPIA. 2 residues coordinate (7R,8Z)-bacteriochlorophyll b: His-183 and His-213. The helical transmembrane segment at 211 to 238 threads the bilayer; sequence PFHAIGITGLFASTWLLACHGSLILSAA. His-230 lines the Fe cation pocket. Phe-253 contributes to the a ubiquinone binding site. A helical membrane pass occupies residues 262-287; sequence GESGVHRLGYIFAIGGILSADLCILL. His-267 is a binding site for Fe cation.

This sequence belongs to the reaction center PufL/M/PsbA/D family. Reaction center is composed of four bacteriochlorophylls, two bacteriopheophytins, two ubiquinones, one iron, and two highly hydrophobic polypeptide chains (designated L and M).

It is found in the cell membrane. Its function is as follows. The reaction center is a membrane-bound complex that mediates the initial photochemical event in the electron transfer process of photosynthesis. The protein is Reaction center protein L chain (pufL) of Chloroflexus aurantiacus (strain ATCC 29366 / DSM 635 / J-10-fl).